Here is a 351-residue protein sequence, read N- to C-terminus: Caveolin-2 (351 aa).

Residues 1–14 show a composition bias toward polar residues; sequence MTRQNTSESDNTQR. Disordered stretches follow at residues 1–55, 71–93, and 144–193; these read MTRQ…QGIA, HRTSLNQEVPTPQRRSHPQYDNL, and QKGS…PEME. The Cytoplasmic portion of the chain corresponds to 1 to 261; that stretch reads MTRQNTSESD…FEIVRIYSYK (261 aa). Residues 22 to 31 show a composition bias toward acidic residues; the sequence is TVDDIDELTD. The segment covering 38-51 has biased composition (basic residues); that stretch reads HHHHHHHHEHHHQH. Residues 167–184 show a composition bias toward low complexity; sequence PAQQSAPPTQQSRPQTTS. Positions 262 to 290 form an intramembrane region, helical; that stretch reads ILTLIFGLIIAFLGGILFALFAFLNIWIF. Topologically, residues 291 to 351 are cytoplasmic; the sequence is RPILILTRMA…EVWEKHIHHV (61 aa).

It belongs to the caveolin family. In terms of assembly, homooligomer. As to expression, expressed in intracellular bodies in intestinal cells.

The protein localises to the golgi apparatus membrane. The protein resides in the cell membrane. Its subcellular location is the membrane. It is found in the caveola. It localises to the apical cell membrane. Its function is as follows. May act as a scaffolding protein within caveolar membranes. Interacts directly with G-protein alpha subunits and can regulate their activity. Thought to have a role in the uptake of lipids and proteins in the intestinal cells; operates in the apical uptake of lipid markers and trafficking of yolk proteins. Affects fecundity and egg laying. The chain is Caveolin-2 (cav-2) from Caenorhabditis elegans.